A 173-amino-acid polypeptide reads, in one-letter code: Co-chaperone protein HscB homolog (173 aa).

One can recognise a J domain in the interval 5 to 77; that stretch reads CHFALFDLQP…SQRARYLLAL (73 aa).

The protein belongs to the HscB family. Interacts with HscA and stimulates its ATPase activity.

Co-chaperone involved in the maturation of iron-sulfur cluster-containing proteins. Seems to help targeting proteins to be folded toward HscA. This chain is Co-chaperone protein HscB homolog, found in Ectopseudomonas mendocina (strain ymp) (Pseudomonas mendocina).